The following is a 397-amino-acid chain: Acetate kinase (397 aa).

Asn7 is a binding site for Mg(2+). Lys14 contacts ATP. A substrate-binding site is contributed by Arg88. Asp145 (proton donor/acceptor) is an active-site residue. ATP-binding positions include 205–209 (HLGNG), 279–281 (DMR), and 326–330 (GIGEN). Glu380 contributes to the Mg(2+) binding site.

Belongs to the acetokinase family. In terms of assembly, homodimer. Mg(2+) is required as a cofactor. Requires Mn(2+) as cofactor.

The protein resides in the cytoplasm. The enzyme catalyses acetate + ATP = acetyl phosphate + ADP. The protein operates within metabolic intermediate biosynthesis; acetyl-CoA biosynthesis; acetyl-CoA from acetate: step 1/2. Functionally, catalyzes the formation of acetyl phosphate from acetate and ATP. Can also catalyze the reverse reaction. This chain is Acetate kinase, found in Campylobacter concisus (strain 13826).